We begin with the raw amino-acid sequence, 378 residues long: Lipid-A-disaccharide synthase (378 aa).

This sequence belongs to the LpxB family.

It catalyses the reaction a lipid X + a UDP-2-N,3-O-bis[(3R)-3-hydroxyacyl]-alpha-D-glucosamine = a lipid A disaccharide + UDP + H(+). It participates in bacterial outer membrane biogenesis; LPS lipid A biosynthesis. Functionally, condensation of UDP-2,3-diacylglucosamine and 2,3-diacylglucosamine-1-phosphate to form lipid A disaccharide, a precursor of lipid A, a phosphorylated glycolipid that anchors the lipopolysaccharide to the outer membrane of the cell. The sequence is that of Lipid-A-disaccharide synthase from Pseudomonas aeruginosa (strain UCBPP-PA14).